The primary structure comprises 691 residues: MDQNQHLNKTAEAQPSENKKTRYCNGLKMFLAALSLSFIAKTLGAIIMKSSIIHIERRFEISSSLVGFIDGSFEIGNLLVIVFVSYFGSKLHRPKLIGIGCFIMGIGGVLTALPHFFMGYYRYSKETNINSSENSTSTLSTCLINQILSLNRASPEIVGKGCLKESGSYMWIYVFMGNMLRGIGETPIVPLGLSYIDDFAKEGHSSLYLGILNAIAMIGPIIGFTLGSLFSKMYVDIGYVDLSTIRITPTDSRWVGAWWLNFLVSGLFSIISSIPFFFLPQTPNKPQKERKASLSLHVLETNDEKDQTANLTNQGKNITKNVTGFFQSFKSILTNPLYVMFVLLTLLQVSSYIGAFTYVFKYVEQQYGQPSSKANILLGVITIPIFASGMFLGGYIIKKFKLNTVGIAKFSCFTAVMSLSFYLLYFFILCENKSVAGLTMTYDGNNPVTSHRDVPLSYCNSDCNCDESQWEPVCGNNGITYISPCLAGCKSSSGNKKPIVFYNCSCLEVTGLQNRNYSAHLGECPRDDACTRKFYFFVAIQVLNLFFSALGGTSHVMLIVKIVQPELKSLALGFHSMVIRALGGILAPIYFGALIDTTCIKWSTNNCGTRGSCRTYNSTSFSRVYLGLSSMLRVSSLVLYIILIYAMKKKYQEKDINASENGSVMDEANLESLNKNKHFVPSAGADSETHC.

Residues methionine 1 to lysine 28 are Cytoplasmic-facing. The helical transmembrane segment at methionine 29–methionine 48 threads the bilayer. Residues lysine 49–glycine 67 are Extracellular-facing. A helical transmembrane segment spans residues phenylalanine 68 to glycine 88. Topologically, residues serine 89–proline 94 are cytoplasmic. Residues lysine 95–glycine 119 form a helical membrane-spanning segment. At tyrosine 120 to serine 168 the chain is on the extracellular side. N-linked (GlcNAc...) asparagine glycosylation is found at asparagine 130 and asparagine 134. The chain crosses the membrane as a helical span at residues tyrosine 169–aspartate 197. Residues aspartate 198 to alanine 216 are Cytoplasmic-facing. Residues methionine 217–isoleucine 237 form a helical membrane-spanning segment. Over glycine 238–valine 255 the chain is Extracellular. The chain crosses the membrane as a helical span at residues glycine 256–proline 280. At glutamine 281–serine 331 the chain is on the cytoplasmic side. Phosphoserine is present on residues serine 293 and serine 295. The helical transmembrane segment at isoleucine 332–isoleucine 353 threads the bilayer. Topologically, residues glycine 354–lysine 373 are extracellular. Residues alanine 374–isoleucine 397 form a helical membrane-spanning segment. Residues lysine 398 to lysine 401 lie on the Cytoplasmic side of the membrane. The chain crosses the membrane as a helical span at residues leucine 402 to tyrosine 425. The Extracellular portion of the chain corresponds to phenylalanine 426–phenylalanine 537. Residue asparagine 432 is glycosylated (N-linked (GlcNAc...) asparagine). Residues aspartate 453 to glutamate 508 form the Kazal-like domain. 3 disulfides stabilise this stretch: cysteine 459–cysteine 489, cysteine 465–cysteine 485, and cysteine 474–cysteine 506. Residues asparagine 503 and asparagine 516 are each glycosylated (N-linked (GlcNAc...) asparagine). Residues valine 538 to valine 560 traverse the membrane as a helical segment. The Cytoplasmic segment spans residues lysine 561–serine 569. Residues leucine 570–isoleucine 595 traverse the membrane as a helical segment. Residues aspartate 596–serine 629 lie on the Extracellular side of the membrane. N-linked (GlcNAc...) asparagine glycosylation is present at asparagine 617. The helical transmembrane segment at serine 630–methionine 647 threads the bilayer. Over lysine 648 to cysteine 691 the chain is Cytoplasmic. Residues serine 672 and serine 682 each carry the phosphoserine modification.

It belongs to the organo anion transporter (TC 2.A.60) family. Highly expressed in liver, at the basolateral membranes of centrilobular hepatocytes. Expressed in liver (at protein level). Expressed in fetal liver. Not detected in heart, brain, placenta, lung, skeletal muscle, kidney, pancreas, spleen, thymus, prostate, testis, ovary, small intestine, colon and leukocyte. In testis, primarily localized to the basal membrane of Sertoli cells and weakly expressed in Leydig cells and within the tubules.

Its subcellular location is the basolateral cell membrane. The protein resides in the basal cell membrane. The enzyme catalyses taurocholate(out) = taurocholate(in). It catalyses the reaction dehydroepiandrosterone 3-sulfate(out) = dehydroepiandrosterone 3-sulfate(in). The catalysed reaction is estrone 3-sulfate(out) = estrone 3-sulfate(in). It carries out the reaction 3,3',5'-triiodo-L-thyronine(out) = 3,3',5'-triiodo-L-thyronine(in). The enzyme catalyses L-thyroxine(out) = L-thyroxine(in). It catalyses the reaction prostaglandin E2(out) = prostaglandin E2(in). The catalysed reaction is thromboxane B2(out) = thromboxane B2(in). It carries out the reaction 17beta-estradiol 17-O-(beta-D-glucuronate)(out) = 17beta-estradiol 17-O-(beta-D-glucuronate)(in). The enzyme catalyses leukotriene C4(out) = leukotriene C4(in). It catalyses the reaction leukotriene E4(out) = leukotriene E4(in). The catalysed reaction is (4E,15E)-bilirubin IXalpha C8-beta-D-glucuronoside(out) = (4E,15E)-bilirubin IXalpha C8-beta-D-glucuronoside(in). It carries out the reaction bilirubin IXalpha bis-beta-D-glucuronoside(out) = bilirubin IXalpha bis-beta-D-glucuronoside(in). Its function is as follows. Mediates the Na(+)-independent uptake of organic anions. Shows broad substrate specificity, can transport both organic anions such as bile acid taurocholate (cholyltaurine) and conjugated steroids (dehydroepiandrosterone 3-sulfate, 17-beta-glucuronosyl estradiol, and estrone 3-sulfate), as well as eicosanoids (prostaglandin E2, thromboxane B2, leukotriene C4, and leukotriene E4), and thyroid hormones (T4/L-thyroxine, and T3/3,3',5'-triiodo-L-thyronine). Can take up bilirubin glucuronides from plasma into the liver, contributing to the detoxification-enhancing liver-blood shuttling loop. Involved in the clearance of endogenous and exogenous substrates from the liver. Transports coproporphyrin I and III, by-products of heme synthesis, and may be involved in their hepatic disposition. May contribute to regulate the transport of organic compounds in testes across the blood-testis-barrier. Can transport HMG-CoA reductase inhibitors (also known as statins), such as pravastatin and pitavastatin, a clinically important class of hypolipidemic drugs. May play an important role in plasma and tissue distribution of the structurally diverse chemotherapeutic drug methotrexate. May also transport antihypertension agents, such as the angiotensin-converting enzyme (ACE) inhibitor prodrug enalapril, and the highly selective angiotensin II AT1-receptor antagonist valsartan, in the liver. Shows a pH-sensitive substrate specificity towards prostaglandin E2 and T4 which may be ascribed to the protonation state of the binding site and leads to a stimulation of substrate transport in an acidic microenvironment. Hydrogencarbonate/HCO3(-) acts as the probable counteranion that exchanges for organic anions. The polypeptide is Solute carrier organic anion transporter family member 1B1 (SLCO1B1) (Homo sapiens (Human)).